We begin with the raw amino-acid sequence, 639 residues long: Protein artemis (639 aa).

3 disordered regions span residues 450 to 496 (MDCT…LTSS), 515 to 570 (SELE…SQVD), and 590 to 617 (EAAE…VPQP). Residues 454–466 (ESNDDDDDEDDAA) show a composition bias toward acidic residues. The span at 518–537 (ENSQNTQTLSTENTASQSPE) shows a compositional bias: polar residues. Residues 548 to 560 (VHMSSSQSTHISD) are compositionally biased toward low complexity.

Belongs to the DNA repair metallo-beta-lactamase (DRMBL) family.

It localises to the nucleus. Functionally, may have a role in the processing of DNA double strand breaks (DSBs) prior to their repair by the non homologous end joining (NHEJ) pathway. Probably exhibits both exonuclease and endonuclease activity. This is Protein artemis (dclre1c) from Danio rerio (Zebrafish).